A 561-amino-acid polypeptide reads, in one-letter code: uncharacterized protein (561 aa).

A run of 6 helical transmembrane segments spans residues 10–29 (LLRN…GYWI), 34–56 (FGSL…SQIG), 63–80 (LKTV…FQSG), 95–117 (VLMA…RMFH), 122–144 (LAAG…SSAL), and 164–186 (GYAV…ILPW). RCK C-terminal domains lie at 205-287 (QGMA…LLGE) and 294-376 (HDMD…ELGS). The next 5 helical transmembrane spans lie at 386-403 (LVFH…GLIV), 407-429 (GSIP…FGWY), 442-464 (AAST…LQTG), 479-501 (FMLG…RYVL), and 538-560 (SFAI…VVAF).

This sequence belongs to the AAE transporter (TC 2.A.81) family.

It is found in the cell membrane. This is an uncharacterized protein from Zymomonas mobilis subsp. mobilis (strain ATCC 31821 / ZM4 / CP4).